A 280-amino-acid chain; its full sequence is Energy-coupling factor transporter ATP-binding protein EcfA1 (280 aa).

The ABC transporter domain occupies 6 to 241 (LRTENISFQY…SHMLQEIGLD (236 aa)). Residue 40 to 47 (GQNGSGKS) coordinates ATP.

It belongs to the ABC transporter superfamily. Energy-coupling factor EcfA family. As to quaternary structure, forms a stable energy-coupling factor (ECF) transporter complex composed of 2 membrane-embedded substrate-binding proteins (S component), 2 ATP-binding proteins (A component) and 2 transmembrane proteins (T component).

It localises to the cell membrane. ATP-binding (A) component of a common energy-coupling factor (ECF) ABC-transporter complex. Unlike classic ABC transporters this ECF transporter provides the energy necessary to transport a number of different substrates. The protein is Energy-coupling factor transporter ATP-binding protein EcfA1 of Bacillus thuringiensis subsp. konkukian (strain 97-27).